The chain runs to 531 residues: Peptide chain release factor 3 (531 aa).

Residues Ser13 to Met282 form the tr-type G domain. GTP-binding positions include Ser22–Thr29, Asp90–His94, and Asn144–Asp147.

This sequence belongs to the TRAFAC class translation factor GTPase superfamily. Classic translation factor GTPase family. PrfC subfamily.

It is found in the cytoplasm. Increases the formation of ribosomal termination complexes and stimulates activities of RF-1 and RF-2. It binds guanine nucleotides and has strong preference for UGA stop codons. It may interact directly with the ribosome. The stimulation of RF-1 and RF-2 is significantly reduced by GTP and GDP, but not by GMP. The polypeptide is Peptide chain release factor 3 (Vibrio cholerae serotype O1 (strain ATCC 39541 / Classical Ogawa 395 / O395)).